A 310-amino-acid chain; its full sequence is Olfactory receptor 8I2 (310 aa).

The Extracellular segment spans residues 1–25 (MAGNNFTEVTVFILSGFANHPELQV). The N-linked (GlcNAc...) asparagine glycan is linked to N5. Residues 26 to 46 (SLFLMFLFIYLFTVLGNLGLI) form a helical membrane-spanning segment. The Cytoplasmic segment spans residues 47–54 (TLIRMDSQ). A helical transmembrane segment spans residues 55 to 75 (LHTPMYFFLSNLAFIDIFYSS). The Extracellular segment spans residues 76–99 (TVTPKALVNFQSNRRSISFVGCFV). C97 and C188 are disulfide-bonded. A helical membrane pass occupies residues 100 to 120 (QMYFFVGLVCCECFLLGSMAY). The Cytoplasmic segment spans residues 121-139 (NRYIAICNPLLYSVVMSQK). A helical transmembrane segment spans residues 140 to 160 (VSNWLGVMPYVIGFTSSLISV). Residues 161 to 196 (WVISSLAFCDSSINHFFCDTTALLALSCVDTFGTEM) are Extracellular-facing. A helical transmembrane segment spans residues 197–216 (VSFVLAGFTLLSSLLIITVT). Over 217–236 (YIIIISAILRIQSAAGRQKA) the chain is Cytoplasmic. Residues 237 to 257 (FSTCASHLMAVTIFYGSLIFT) form a helical membrane-spanning segment. Residues 258-270 (YLQPDNTSSLTQA) lie on the Extracellular side of the membrane. The chain crosses the membrane as a helical span at residues 271–291 (QVASVFYTIVIPMLNPLIYSL). Residues 292 to 310 (RNKDVKNALLRVIHRKLFP) lie on the Cytoplasmic side of the membrane.

It belongs to the G-protein coupled receptor 1 family.

It is found in the cell membrane. Functionally, odorant receptor. This is Olfactory receptor 8I2 (OR8I2) from Homo sapiens (Human).